Reading from the N-terminus, the 487-residue chain is Serine/threonine-protein kinase BSK8 (487 aa).

Residue G2 is the site of N-myristoyl glycine attachment. S20 bears the Phosphoserine mark. Residues 59-325 (ENIVSEHGER…DLEIASHQLL (267 aa)) enclose the Protein kinase domain. ATP contacts are provided by residues 65–73 (HGERAPNVV), N71, K87, and 133–135 (EFM). The active-site Proton acceptor is D181. Residues 185–186 (YR) and N205 each bind ATP. At S213 the chain carries Phosphoserine.

Belongs to the protein kinase superfamily. Ser/Thr protein kinase family. In terms of assembly, interacts with ASK7/BIN2, BSK1, BSK5, BSK6 and BSK11. Interacts with BSL2. Post-translationally, phosphorylated by BRI1, ASK7/BIN2 and ASK9/BIL2.

The protein resides in the cell membrane. It catalyses the reaction L-seryl-[protein] + ATP = O-phospho-L-seryl-[protein] + ADP + H(+). The catalysed reaction is L-threonyl-[protein] + ATP = O-phospho-L-threonyl-[protein] + ADP + H(+). Its function is as follows. Probable serine/threonine kinase that acts as a positive regulator of brassinosteroid (BR) signaling downstream of the receptor kinase BRI1. Functions redundantly with BSK3, BSK4, BSK6 and BSK7. Involved in the regulation of sucrose-phosphate synthase 1 (SPS1) in the context of sucrose resuply after starvation. Activates BSL2, a phosphatase that may dephosphorylate SPS1, leading to the activation of SPS1. The chain is Serine/threonine-protein kinase BSK8 from Arabidopsis thaliana (Mouse-ear cress).